Reading from the N-terminus, the 436-residue chain is ATP-dependent 6-phosphofructokinase (436 aa).

Residues Gly90, 155 to 156 (RG), and 180 to 183 (GDGT) contribute to the ATP site. Asp181 is a Mg(2+) binding site. Residues 209–211 (TID), 254–256 (MGR), Glu307, and 362–365 (YMIR) contribute to the substrate site. Catalysis depends on Asp211, which acts as the Proton acceptor.

This sequence belongs to the phosphofructokinase type A (PFKA) family. PPi-dependent PFK group II subfamily. Atypical ATP-dependent clade 'X' sub-subfamily. In terms of assembly, homodimer. Aggregates to a homotetramer after activation by ATP. It depends on Mg(2+) as a cofactor.

It localises to the cytoplasm. The catalysed reaction is beta-D-fructose 6-phosphate + ATP = beta-D-fructose 1,6-bisphosphate + ADP + H(+). The protein operates within carbohydrate degradation; glycolysis; D-glyceraldehyde 3-phosphate and glycerone phosphate from D-glucose: step 3/4. Activated by nucleoside triphosphates. Inhibited by phosphoenolpyruvate. EDTA and biphosphonates play the role of inhibitors of kinase activity. Functionally, catalyzes the phosphorylation of D-fructose 6-phosphate to fructose 1,6-bisphosphate by ATP, the first committing step of glycolysis. The chain is ATP-dependent 6-phosphofructokinase (PPi-PFK) from Entamoeba histolytica (strain ATCC 30459 / HM-1:IMSS / ABRM).